The sequence spans 665 residues: Methionine--tRNA ligase (665 aa).

The 'HIGH' region signature appears at Y16–H26. A 'KMSKS' region motif is present at residues K311 to S315. K314 lines the ATP pocket. The tRNA-binding domain occupies D564–K665.

This sequence belongs to the class-I aminoacyl-tRNA synthetase family. MetG type 2B subfamily. In terms of assembly, homodimer.

Its subcellular location is the cytoplasm. The catalysed reaction is tRNA(Met) + L-methionine + ATP = L-methionyl-tRNA(Met) + AMP + diphosphate. In terms of biological role, is required not only for elongation of protein synthesis but also for the initiation of all mRNA translation through initiator tRNA(fMet) aminoacylation. The protein is Methionine--tRNA ligase of Listeria monocytogenes serotype 4b (strain F2365).